A 666-amino-acid polypeptide reads, in one-letter code: DNA mismatch repair protein MutL (666 aa).

This sequence belongs to the DNA mismatch repair MutL/HexB family.

In terms of biological role, this protein is involved in the repair of mismatches in DNA. It is required for dam-dependent methyl-directed DNA mismatch repair. May act as a 'molecular matchmaker', a protein that promotes the formation of a stable complex between two or more DNA-binding proteins in an ATP-dependent manner without itself being part of a final effector complex. This is DNA mismatch repair protein MutL from Clostridium botulinum (strain Loch Maree / Type A3).